Reading from the N-terminus, the 483-residue chain is NADPH:adrenodoxin oxidoreductase, mitochondrial (483 aa).

Residues 1-14 (MSRYLARYMVSRYF) constitute a mitochondrion transit peptide. FAD is bound by residues A32, D53, L61, and L97. NADP(+)-binding positions include 169 to 172 (QGNV), 213 to 214 (RR), and E225. FAD is bound by residues W391 and 398 to 400 (GII). G398 lines the NADP(+) pocket.

It belongs to the ferredoxin--NADP reductase type 1 family. FAD serves as cofactor.

The protein localises to the mitochondrion. The enzyme catalyses 2 reduced [adrenodoxin] + NADP(+) + H(+) = 2 oxidized [adrenodoxin] + NADPH. Associates in vitro with the adrenodoxin-like protein MFDX1 to form an efficient low potential electron transfer chain that is able to reduce cytochrome C. Functions as accessory mitochondrial protein involved with BIO2 in the plant biotin synthase reaction. This Arabidopsis thaliana (Mouse-ear cress) protein is NADPH:adrenodoxin oxidoreductase, mitochondrial.